Here is a 536-residue protein sequence, read N- to C-terminus: Protein ST7 homolog (536 aa).

Transmembrane regions (helical) follow at residues 3 to 23 and 49 to 69; these read CSWTFLWLLWIALVAVLLFAL and FYVALTGTSSLVSGIILIFEW. Residues 191–218 adopt a coiled-coil conformation; that stretch reads LAEEESETVSQAENLLRRALRAIESTLN. Residues 465-485 form a helical membrane-spanning segment; sequence TLMMLLQTFICLAICILAVLA.

Belongs to the ST7 family.

It is found in the membrane. This Caenorhabditis elegans protein is Protein ST7 homolog.